The chain runs to 64 residues: Large ribosomal subunit protein bL35 (64 aa).

It belongs to the bacterial ribosomal protein bL35 family.

This Streptomyces coelicolor (strain ATCC BAA-471 / A3(2) / M145) protein is Large ribosomal subunit protein bL35.